A 174-amino-acid polypeptide reads, in one-letter code: Adenylate kinase (174 aa).

An NMP region spans residues 12-41; that stretch reads STGDMLRAAIKAGTLLGLEAKKIIDEGGLV. AMP is bound by residues Thr13, Arg18, 39 to 41, 67 to 70, and Gln74; these read GLV and GFPR. The tract at residues 104-141 is LID; it reads GRRVHLASGRTYHVTYNPPKVEGKDDVTGEDLIQRDDD. Residues Arg105 and 114–115 each bind ATP; that span reads TY. AMP is bound by residues Arg138 and Arg149.

The protein belongs to the adenylate kinase family. In terms of assembly, monomer.

It is found in the cytoplasm. The enzyme catalyses AMP + ATP = 2 ADP. It functions in the pathway purine metabolism; AMP biosynthesis via salvage pathway; AMP from ADP: step 1/1. In terms of biological role, catalyzes the reversible transfer of the terminal phosphate group between ATP and AMP. Plays an important role in cellular energy homeostasis and in adenine nucleotide metabolism. This is Adenylate kinase from Neisseria polysaccharea.